We begin with the raw amino-acid sequence, 681 residues long: Leucine-rich repeat, immunoglobulin-like domain and transmembrane domain-containing protein 3 (681 aa).

The signal sequence occupies residues Met-1 to Gly-19. An N-linked (GlcNAc...) asparagine glycan is attached at Asn-18. Residues Thr-20–Ser-584 are Lumenal-facing. 5 LRR repeats span residues Pro-56–Tyr-79, Leu-80–Asn-103, Leu-104–Met-128, Pro-129–Tyr-151, and Leu-152–Ser-175. The Ig-like domain maps to Pro-254–Thr-344. The cysteines at positions 275 and 328 are disulfide-linked. The N-linked (GlcNAc...) asparagine glycan is linked to Asn-296. Disordered stretches follow at residues Thr-350–Ser-391 and Thr-425–Pro-464. Residues Thr-378–Ser-391 show a composition bias toward polar residues. N-linked (GlcNAc...) asparagine glycans are attached at residues Asn-485 and Asn-506. The chain crosses the membrane as a helical span at residues Leu-585–Leu-605. Topologically, residues Tyr-606–Gly-681 are cytoplasmic.

In terms of tissue distribution, detected in the outer plexiform layer (OPL) of the retina, where it localizes to rod and cone ON-bipolar cells (at protein level). Also detected in bipolar cell bodies in the inner retinal layer (INL) (at protein level).

The protein localises to the cell projection. It localises to the dendrite. The protein resides in the perikaryon. Its subcellular location is the endoplasmic reticulum membrane. Its function is as follows. Plays a role in the synapse formation and synaptic transmission between cone photoreceptor cells and retinal bipolar cells. Required for normal transmission of a light-evoked stimulus from the cone photoreceptor cells to the ON-bipolar cells and ON-ganglion cells in the inner retina. Required in retinal ON-bipolar cells for normal localization of the cation channel TRPM1 at dendrite tips. Seems to play a specific role in synaptic contacts made by ON-bipolar cells with cone photoreceptor pedicles. May also have a role in cone synapse formation. Might facilitate FGFR1 exit from the endoplasmic reticulum to the Golgi. Could be a regulator of the FGFRs. This Mus musculus (Mouse) protein is Leucine-rich repeat, immunoglobulin-like domain and transmembrane domain-containing protein 3.